We begin with the raw amino-acid sequence, 191 residues long: Ribonuclease M5 (191 aa).

The Toprim domain occupies 8–91 (HEFIVVEGRD…AFINRQDALP (84 aa)). Residues Glu14, Asp60, and Asp62 each coordinate Mg(2+).

This sequence belongs to the ribonuclease M5 family. It depends on Mg(2+) as a cofactor.

It is found in the cytoplasm. The enzyme catalyses Endonucleolytic cleavage of RNA, removing 21 and 42 nucleotides, respectively, from the 5'- and 3'-termini of a 5S-rRNA precursor.. Functionally, required for correct processing of both the 5' and 3' ends of 5S rRNA precursor. Cleaves both sides of a double-stranded region yielding mature 5S rRNA in one step. The polypeptide is Ribonuclease M5 (Listeria monocytogenes serovar 1/2a (strain ATCC BAA-679 / EGD-e)).